Here is a 404-residue protein sequence, read N- to C-terminus: Cysteine desulfurase IscS (404 aa).

Residues 75-76, asparagine 155, glutamine 183, and 203-205 each bind pyridoxal 5'-phosphate; these read AT and SAH. Lysine 206 carries the post-translational modification N6-(pyridoxal phosphate)lysine. Residue threonine 243 participates in pyridoxal 5'-phosphate binding. Cysteine 328 acts as the Cysteine persulfide intermediate in catalysis. Residue cysteine 328 coordinates [2Fe-2S] cluster.

This sequence belongs to the class-V pyridoxal-phosphate-dependent aminotransferase family. NifS/IscS subfamily. Homodimer. Forms a heterotetramer with IscU, interacts with other sulfur acceptors. Pyridoxal 5'-phosphate serves as cofactor.

The protein resides in the cytoplasm. It carries out the reaction (sulfur carrier)-H + L-cysteine = (sulfur carrier)-SH + L-alanine. It participates in cofactor biosynthesis; iron-sulfur cluster biosynthesis. Its function is as follows. Master enzyme that delivers sulfur to a number of partners involved in Fe-S cluster assembly, tRNA modification or cofactor biosynthesis. Catalyzes the removal of elemental sulfur atoms from cysteine to produce alanine. Functions as a sulfur delivery protein for Fe-S cluster synthesis onto IscU, an Fe-S scaffold assembly protein, as well as other S acceptor proteins. The sequence is that of Cysteine desulfurase IscS from Aeromonas salmonicida (strain A449).